The chain runs to 316 residues: Pantothenate kinase (316 aa).

95–102 (GSVAVGKS) is a binding site for ATP.

It belongs to the prokaryotic pantothenate kinase family.

It is found in the cytoplasm. The catalysed reaction is (R)-pantothenate + ATP = (R)-4'-phosphopantothenate + ADP + H(+). The protein operates within cofactor biosynthesis; coenzyme A biosynthesis; CoA from (R)-pantothenate: step 1/5. This Shewanella sp. (strain MR-7) protein is Pantothenate kinase.